Consider the following 122-residue polypeptide: Large ribosomal subunit protein uL14c (122 aa).

This sequence belongs to the universal ribosomal protein uL14 family. Part of the 50S ribosomal subunit.

Its subcellular location is the plastid. The protein resides in the chloroplast. In terms of biological role, binds to 23S rRNA. This chain is Large ribosomal subunit protein uL14c, found in Pleurastrum terricola (Filamentous green alga).